We begin with the raw amino-acid sequence, 797 residues long: Protocadherin beta-9 (797 aa).

An N-terminal signal peptide occupies residues 1–26 (MKTRGFSFPRQRQVLFLFLFWGVSLA). Over 27–690 (GSGFGRYSVT…AQADLLTVYL (664 aa)) the chain is Extracellular. Cadherin domains follow at residues 35–133 (VTEE…SPVF), 138–242 (MVLK…VPQF), 247–347 (YETQ…PPEL), 352–451 (LSNS…APAF), and 456–561 (YTLF…SPFV). N-linked (GlcNAc...) asparagine glycosylation is present at asparagine 169. The N-linked (GlcNAc...) asparagine glycan is linked to asparagine 418. A glycan (N-linked (GlcNAc...) asparagine) is linked at asparagine 567. One can recognise a Cadherin 6 domain in the interval 568-671 (GSAPCTELVP…LVDGFSQPYL (104 aa)). Residues 691–711 (VVALASVSSLFLLSVLLFVAV) traverse the membrane as a helical segment. Residues 712-797 (RLCRRSRAAS…TLPNSFGFNY (86 aa)) lie on the Cytoplasmic side of the membrane. Residues 777-797 (HRGGKEIEENSTLPNSFGFNY) form a disordered region. Over residues 786–797 (NSTLPNSFGFNY) the composition is skewed to polar residues.

Its subcellular location is the cell membrane. Its function is as follows. Potential calcium-dependent cell-adhesion protein. May be involved in the establishment and maintenance of specific neuronal connections in the brain. In Homo sapiens (Human), this protein is Protocadherin beta-9 (PCDHB9).